The primary structure comprises 305 residues: Glycine--tRNA ligase alpha subunit (305 aa).

It belongs to the class-II aminoacyl-tRNA synthetase family. Tetramer of two alpha and two beta subunits.

It is found in the cytoplasm. The enzyme catalyses tRNA(Gly) + glycine + ATP = glycyl-tRNA(Gly) + AMP + diphosphate. This is Glycine--tRNA ligase alpha subunit from Streptococcus mutans serotype c (strain ATCC 700610 / UA159).